The following is a 3230-amino-acid chain: Helicase SRCAP (3230 aa).

The interval methionine 1 to leucine 71 is disordered. Low complexity predominate over residues glycine 26–serine 41. The region spanning leucine 124–serine 196 is the HSA domain. 2 disordered regions span residues glutamine 253 to aspartate 547 and glutamate 559 to lysine 581. Low complexity predominate over residues serine 257–serine 273. Residues aspartate 283–aspartate 313 are compositionally biased toward acidic residues. Positions glutamate 315–glutamate 329 are enriched in basic and acidic residues. A compositionally biased stretch (low complexity) spans arginine 337 to serine 356. Acidic residues predominate over residues aspartate 397 to glycine 425. Positions glutamate 426–glutamate 441 are enriched in basic and acidic residues. Acidic residues-rich tracts occupy residues serine 462–glutamine 490, arginine 503–threonine 517, and glutamate 524–aspartate 533. The Helicase ATP-binding domain maps to valine 630–histidine 795. Residue aspartate 643–threonine 650 coordinates ATP. 3 disordered regions span residues alanine 1017 to leucine 1045, proline 1058 to serine 1125, and threonine 1138 to proline 1166. Pro residues-rich tracts occupy residues proline 1018–proline 1030 and proline 1058–glutamine 1076. Positions leucine 1093 to lysine 1107 are enriched in low complexity. Residues proline 1108 to glycine 1123 are compositionally biased toward pro residues. Positions threonine 1138–proline 1160 are enriched in low complexity. A Phosphoserine modification is found at serine 1172. Disordered stretches follow at residues glycine 1320–proline 1366, serine 1406–serine 1425, valine 1629–valine 1760, and serine 1839–arginine 1893. A compositionally biased stretch (pro residues) spans proline 1323–serine 1336. Residues glycine 1337 to threonine 1360 are compositionally biased toward low complexity. The span at proline 1675–leucine 1691 shows a compositional bias: low complexity. Positions glycine 1692 to serine 1733 are enriched in polar residues. The segment covering proline 1750–valine 1760 has biased composition (pro residues). The region spanning lysine 2044–threonine 2197 is the Helicase C-terminal domain. Disordered stretches follow at residues leucine 2214 to valine 2233, phenylalanine 2271 to alanine 2298, valine 2327 to alanine 2453, leucine 2564 to lysine 2583, lysine 2598 to serine 3081, and aspartate 3095 to threonine 3230. Residues glutamate 2215–alanine 2225 show a composition bias toward low complexity. 3 stretches are compositionally biased toward basic and acidic residues: residues glutamate 2284–alanine 2298, valine 2327–glutamine 2358, and lysine 2386–arginine 2403. A compositionally biased stretch (pro residues) spans arginine 2438–alanine 2448. 2 stretches are compositionally biased toward low complexity: residues leucine 2564–leucine 2579 and leucine 2600–leucine 2611. Basic and acidic residues predominate over residues glutamate 2669–glutamate 2679. Over residues valine 2694–glutamate 2712 the composition is skewed to low complexity. A compositionally biased stretch (polar residues) spans serine 2782–arginine 2794. Residues glycine 2807–leucine 2817 show a composition bias toward low complexity. Residues valine 2856–arginine 2868 are compositionally biased toward basic residues. Positions lysine 2857–serine 2869 form a DNA-binding region, a.T hook 1. The segment covering isoleucine 2913–arginine 2926 has biased composition (pro residues). Positions lysine 2936–leucine 2948 form a DNA-binding region, a.T hook 2. Positions threonine 2953–arginine 2965 are enriched in polar residues. Over residues glutamine 2967–leucine 2982 the composition is skewed to pro residues. The span at valine 2983–proline 3002 shows a compositional bias: low complexity. Positions lysine 3004–serine 3016 form a DNA-binding region, a.T hook 3. Positions proline 3011–serine 3020 are enriched in pro residues. A compositionally biased stretch (low complexity) spans proline 3044–serine 3053. Residues serine 3168–aspartate 3184 are compositionally biased toward acidic residues.

The protein belongs to the SNF2/RAD54 helicase family. SWR1 subfamily. Interacts with CREBBP and EP300. May be part of a complex containing SRCAP, CREBBP, CARM1 and GRIP1. Component of the chromatin-remodeling SRCAP complex composed of at least SRCAP, DMAP1, RUVBL1, RUVBL2, ACTL6A, YEATS4, VPS72, ACTR6 and ZNHIT1. Component of a NuA4-related complex which contains EP400, TRRAP/PAF400, SRCAP, BRD8/SMAP, EPC1, DMAP1/DNMAP1, RUVBL1/TIP49, RUVBL2, actin, ACTL6A/BAF53A, VPS72 and YEATS4/GAS41. As to quaternary structure, (Microbial infection) Interacts with hepatitis C virus (HCV) NS5A. In terms of assembly, (Microbial infection) Interacts with human adenovirus 2 DBP.

Its subcellular location is the nucleus. Catalytic component of the SRCAP complex which mediates the ATP-dependent exchange of histone H2AZ/H2B dimers for nucleosomal H2A/H2B, leading to transcriptional regulation of selected genes by chromatin remodeling. Acts as a coactivator for CREB-mediated transcription, steroid receptor-mediated transcription, and Notch-mediated transcription. The chain is Helicase SRCAP (SRCAP) from Homo sapiens (Human).